The chain runs to 122 residues: UPF0102 protein CA_C1763 (122 aa).

It belongs to the UPF0102 family.

This chain is UPF0102 protein CA_C1763, found in Clostridium acetobutylicum (strain ATCC 824 / DSM 792 / JCM 1419 / IAM 19013 / LMG 5710 / NBRC 13948 / NRRL B-527 / VKM B-1787 / 2291 / W).